A 208-amino-acid chain; its full sequence is N-(5'-phosphoribosyl)anthranilate isomerase (208 aa).

The protein belongs to the TrpF family.

The catalysed reaction is N-(5-phospho-beta-D-ribosyl)anthranilate = 1-(2-carboxyphenylamino)-1-deoxy-D-ribulose 5-phosphate. Its pathway is amino-acid biosynthesis; L-tryptophan biosynthesis; L-tryptophan from chorismate: step 3/5. This Neisseria meningitidis serogroup B (strain ATCC BAA-335 / MC58) protein is N-(5'-phosphoribosyl)anthranilate isomerase.